Consider the following 724-residue polypeptide: Catalase-peroxidase (724 aa).

A cross-link (tryptophyl-tyrosyl-methioninium (Trp-Tyr) (with M-252)) is located at residues 98 to 226; sequence WHAAGSYRTA…LAAVQMGLIY (129 aa). His99 serves as the catalytic Proton acceptor. The tryptophyl-tyrosyl-methioninium (Tyr-Met) (with W-98) cross-link spans 226 to 252; sequence YVNPQGVNGEPDPLRTALHVRETFARM. His267 contacts heme b.

It belongs to the peroxidase family. Peroxidase/catalase subfamily. Homodimer or homotetramer. Heme b is required as a cofactor. Post-translationally, formation of the three residue Trp-Tyr-Met cross-link is important for the catalase, but not the peroxidase activity of the enzyme.

The catalysed reaction is H2O2 + AH2 = A + 2 H2O. It catalyses the reaction 2 H2O2 = O2 + 2 H2O. Bifunctional enzyme with both catalase and broad-spectrum peroxidase activity. This Cereibacter sphaeroides (strain ATCC 17025 / ATH 2.4.3) (Rhodobacter sphaeroides) protein is Catalase-peroxidase.